The primary structure comprises 703 residues: Cyclic AMP-dependent transcription factor ATF-6 beta (703 aa).

N-acetylalanine is present on Ala2. Residues Ala2–Gln86 are transcription activation. Over Ala2–Lys396 the chain is Cytoplasmic. 3 disordered regions span residues Val87–Glu114, Leu229–Pro248, and Glu293–Cys317. Low complexity predominate over residues Ser89 to Glu114. The region spanning Leu325 to Leu388 is the bZIP domain. Residues Lys327–Lys347 are basic motif. The segment at Leu350–Leu357 is leucine-zipper. Residues Val397–Ser417 form a helical; Signal-anchor for type II membrane protein membrane-spanning segment. The Lumenal segment spans residues Glu418–Pro703. Positions Pro447–Ala479 are disordered. 2 N-linked (GlcNAc...) asparagine glycosylation sites follow: Asn476 and Asn505. A disordered region spans residues Gln521–Val565. Basic residues predominate over residues Arg522–Pro531. N-linked (GlcNAc...) asparagine glycans are attached at residues Asn610, Asn627, and Asn676. The segment covering Ser660–Asn676 has biased composition (polar residues). The tract at residues Ser660 to Pro703 is disordered. Residues Ser685 to Gln696 are compositionally biased toward low complexity.

It belongs to the bZIP family. ATF subfamily. In terms of assembly, homodimer and heterodimer with ATF6-alpha. The dimer interacts with the nuclear transcription factor Y (NF-Y) trimer through direct binding to NF-Y subunit C (NF-YC). Post-translationally, N-glycosylated. During unfolded protein response, a fragment of approximately 60 kDa containing the cytoplasmic transcription factor domain is released by proteolysis. The cleavage is probably performed sequentially by site-1 (MBTPS1, S1P) and site-2 (MBTPS2, S2P) proteases. Ubiquitous.

Its subcellular location is the endoplasmic reticulum membrane. It localises to the nucleus. Its function is as follows. Precursor of the transcription factor form (Processed cyclic AMP-dependent transcription factor ATF-6 beta), which is embedded in the endoplasmic reticulum membrane. Endoplasmic reticulum stress promotes processing of this form, releasing the transcription factor form that translocates into the nucleus, where it activates transcription of genes involved in the unfolded protein response (UPR). Transcription factor that acts in the unfolded protein response (UPR) pathway by activating UPR target genes induced during ER stress. Binds DNA on the 5'-CCAC[GA]-3' half of the ER stress response element (ERSE) (5'-CCAATN(9)CCAC[GA]-3') when NF-Y is bound to ERSE. The sequence is that of Cyclic AMP-dependent transcription factor ATF-6 beta (ATF6B) from Homo sapiens (Human).